A 277-amino-acid polypeptide reads, in one-letter code: Thiazole synthase (277 aa).

Catalysis depends on Lys118, which acts as the Schiff-base intermediate with DXP. 1-deoxy-D-xylulose 5-phosphate-binding positions include Gly179, 205–206 (AG), and 227–228 (NT).

Belongs to the ThiG family. As to quaternary structure, homotetramer. Forms heterodimers with either ThiH or ThiS.

The protein localises to the plastid. It localises to the chloroplast. It catalyses the reaction [ThiS sulfur-carrier protein]-C-terminal-Gly-aminoethanethioate + 2-iminoacetate + 1-deoxy-D-xylulose 5-phosphate = [ThiS sulfur-carrier protein]-C-terminal Gly-Gly + 2-[(2R,5Z)-2-carboxy-4-methylthiazol-5(2H)-ylidene]ethyl phosphate + 2 H2O + H(+). It functions in the pathway cofactor biosynthesis; thiamine diphosphate biosynthesis. Functionally, catalyzes the rearrangement of 1-deoxy-D-xylulose 5-phosphate (DXP) to produce the thiazole phosphate moiety of thiamine. Sulfur is provided by the thiocarboxylate moiety of the carrier protein ThiS. In vitro, sulfur can be provided by H(2)S. In Emiliania huxleyi (Coccolithophore), this protein is Thiazole synthase.